Here is a 172-residue protein sequence, read N- to C-terminus: uncharacterized protein (172 aa).

This is an uncharacterized protein from Agrobacterium tumefaciens (strain Ach5).